The sequence spans 250 residues: MSTLLEKTRKVNRILQKTGIQPVDFNEMASILKDVIEANVYILSRKGKVLGYSILKDYGNDIFAQSKIIPEEYNDKLLRVTETLANDKGNLFKEDKILSDLILTIVPVNGGGDRLGTLVLSRGVKEFTDDDLILAEYGATVVGLEILRSKNEEIEDEARKRAVVQMALGTLSYSELEAIKNIFEELNGKEGLLVASKIADKVGITRSVIVNALRKFESAGIIESRSLGMKGTHIRVLNDKLLEELEKMKR.

A GAF domain region spans residues 1-147 (MSTLLEKTRK…GATVVGLEIL (147 aa)). The segment at residues 195 to 214 (ASKIADKVGITRSVIVNALR) is a DNA-binding region (H-T-H motif).

Belongs to the CodY family.

Its subcellular location is the cytoplasm. In terms of biological role, DNA-binding global transcriptional regulator which is involved in the adaptive response to starvation and acts by directly or indirectly controlling the expression of numerous genes in response to nutrient availability. During rapid exponential growth, CodY is highly active and represses genes whose products allow adaptation to nutrient depletion. This Thermoanaerobacter sp. (strain X514) protein is Global transcriptional regulator CodY.